Consider the following 151-residue polypeptide: UPF0756 membrane protein Aflv_0503 (151 aa).

4 consecutive transmembrane segments (helical) span residues 4–24 (FIFLFILLVIGMMAKNQSLII), 52–72 (LGVTIITIAVLVPIATGKIGF), 85–105 (WIAMLSGIAVALLAKGGVALL), and 115–135 (LVLGTILAVSLFKGVAVGPLI).

The protein belongs to the UPF0756 family.

The protein localises to the cell membrane. The sequence is that of UPF0756 membrane protein Aflv_0503 from Anoxybacillus flavithermus (strain DSM 21510 / WK1).